The following is a 205-amino-acid chain: Thiamine-phosphate synthase (205 aa).

4-amino-2-methyl-5-(diphosphooxymethyl)pyrimidine-binding positions include 37-41 (QVREK) and asparagine 69. Positions 70 and 89 each coordinate Mg(2+). Position 108 (serine 108) interacts with 4-amino-2-methyl-5-(diphosphooxymethyl)pyrimidine. 134–136 (TGS) contacts 2-[(2R,5Z)-2-carboxy-4-methylthiazol-5(2H)-ylidene]ethyl phosphate. Lysine 137 lines the 4-amino-2-methyl-5-(diphosphooxymethyl)pyrimidine pocket. 2-[(2R,5Z)-2-carboxy-4-methylthiazol-5(2H)-ylidene]ethyl phosphate contacts are provided by residues glycine 165 and 185 to 186 (IS).

Belongs to the thiamine-phosphate synthase family. Mg(2+) is required as a cofactor.

The enzyme catalyses 2-[(2R,5Z)-2-carboxy-4-methylthiazol-5(2H)-ylidene]ethyl phosphate + 4-amino-2-methyl-5-(diphosphooxymethyl)pyrimidine + 2 H(+) = thiamine phosphate + CO2 + diphosphate. It catalyses the reaction 2-(2-carboxy-4-methylthiazol-5-yl)ethyl phosphate + 4-amino-2-methyl-5-(diphosphooxymethyl)pyrimidine + 2 H(+) = thiamine phosphate + CO2 + diphosphate. It carries out the reaction 4-methyl-5-(2-phosphooxyethyl)-thiazole + 4-amino-2-methyl-5-(diphosphooxymethyl)pyrimidine + H(+) = thiamine phosphate + diphosphate. It participates in cofactor biosynthesis; thiamine diphosphate biosynthesis; thiamine phosphate from 4-amino-2-methyl-5-diphosphomethylpyrimidine and 4-methyl-5-(2-phosphoethyl)-thiazole: step 1/1. Functionally, condenses 4-methyl-5-(beta-hydroxyethyl)thiazole monophosphate (THZ-P) and 2-methyl-4-amino-5-hydroxymethyl pyrimidine pyrophosphate (HMP-PP) to form thiamine monophosphate (TMP). In Clostridium botulinum (strain ATCC 19397 / Type A), this protein is Thiamine-phosphate synthase.